The following is a 212-amino-acid chain: Pyridoxine/pyridoxamine 5'-phosphate oxidase (212 aa).

Residues 8–11 (RREY) and lysine 66 contribute to the substrate site. FMN contacts are provided by residues 61 to 66 (RIVLLK), 76 to 77 (FT), arginine 82, lysine 83, and glutamine 105. Substrate is bound by residues tyrosine 123, arginine 127, and serine 131. FMN-binding positions include 140 to 141 (QS) and tryptophan 185. 191 to 193 (RLH) is a substrate binding site. Residue arginine 195 coordinates FMN.

It belongs to the pyridoxamine 5'-phosphate oxidase family. In terms of assembly, homodimer. FMN serves as cofactor.

It carries out the reaction pyridoxamine 5'-phosphate + O2 + H2O = pyridoxal 5'-phosphate + H2O2 + NH4(+). It catalyses the reaction pyridoxine 5'-phosphate + O2 = pyridoxal 5'-phosphate + H2O2. It participates in cofactor metabolism; pyridoxal 5'-phosphate salvage; pyridoxal 5'-phosphate from pyridoxamine 5'-phosphate: step 1/1. It functions in the pathway cofactor metabolism; pyridoxal 5'-phosphate salvage; pyridoxal 5'-phosphate from pyridoxine 5'-phosphate: step 1/1. Functionally, catalyzes the oxidation of either pyridoxine 5'-phosphate (PNP) or pyridoxamine 5'-phosphate (PMP) into pyridoxal 5'-phosphate (PLP). The protein is Pyridoxine/pyridoxamine 5'-phosphate oxidase of Shewanella baltica (strain OS223).